The chain runs to 590 residues: MHRYRSHTCGALRESDIDQTVRVSGWCHRIRDHGGLLFIDLRDHYGLTQCVADPDSPAFKDAEKLRAEWVVRIDGKVRRRPEGTDNNDLPTGQVEIFITEIEVLGPAGELPLPVFGEQEYPEDIRLKYRFLDLRREKLHQNIMTRGAIVDSMRKRMKEQGFFEFQTPILTASSPEGARDFLVPSRIHPGRFYALPQAPQQYKQLLMMSGFDRYFQIAPCFRDEDPRADRLPGEFYQLDVEMSFITQDDVFAAMEPVITGVFEDFAKGKPVTKSWPRIAYADSLKKYGTDKPDLRNPIEMQNVSEHFRGSGFKVFARMLEEERNQVWAIPGPGGGSRAFCDRMNSWAQGEGQPGLGYIMWREGGEGAGPLANNIGPERTAAIREQLGLKAGDAAFFVAGDPSKFVRFAGLARTRLGEELNLVDKERFELAWIVDFPMYEYNEDDKKVDFSHNPFSMPQGGMDALLNQDPLTIKAFQYDITCNGFEIASGGIRNHRPEAMVKAFEIAGYGEQEVVDRFGGMYRAFQYGAPPHGGMAAGVDRIVMLLCGTNNLREISLFPMNQRAEDLLMGAPSDVTPKQLRELHIRLNLPEN.

Glu175 contributes to the L-aspartate binding site. The tract at residues 199–202 (QQYK) is aspartate. Residues Arg221 and His450 each contribute to the L-aspartate site. 221 to 223 (RDE) serves as a coordination point for ATP. Residue Glu484 participates in ATP binding. Arg491 contributes to the L-aspartate binding site. 536 to 539 (GVDR) provides a ligand contact to ATP.

Belongs to the class-II aminoacyl-tRNA synthetase family. Type 1 subfamily. Homodimer.

Its subcellular location is the cytoplasm. The catalysed reaction is tRNA(Asx) + L-aspartate + ATP = L-aspartyl-tRNA(Asx) + AMP + diphosphate. Aspartyl-tRNA synthetase with relaxed tRNA specificity since it is able to aspartylate not only its cognate tRNA(Asp) but also tRNA(Asn). Reaction proceeds in two steps: L-aspartate is first activated by ATP to form Asp-AMP and then transferred to the acceptor end of tRNA(Asp/Asn). The protein is Aspartate--tRNA(Asp/Asn) ligase of Rhodopseudomonas palustris (strain BisB18).